Consider the following 256-residue polypeptide: MTSQGRGTRRGGTRGNVRAFPEGPTDAGLTPRQRRVLEVIRAAVERRGYPPSVREIGEAVGLTSTSSVAHQLKVLEEKGYLRRDPNRPRAMEVLTVEHPRQRADVGAGATTVAGTIPIVGEAAPGTTEGSKSDAAYVPVLGRIAAGGPILAEQAVEDVFPLPREIVGEGTLFLLRVVGDSMINAAICDGDWVVVRQQPVADNGEIVAAMIDGEATVKRLRVRDGKIWLHPENSAFADIPGEDATILGRIVAVLRRV.

The tract at residues 1 to 31 (MTSQGRGTRRGGTRGNVRAFPEGPTDAGLTP) is disordered. The H-T-H motif DNA-binding region spans 53–73 (VREIGEAVGLTSTSSVAHQLK). Catalysis depends on for autocatalytic cleavage activity residues Ser-180 and Lys-217.

This sequence belongs to the peptidase S24 family. As to quaternary structure, homodimer.

It catalyses the reaction Hydrolysis of Ala-|-Gly bond in repressor LexA.. Represses a number of genes involved in the response to DNA damage (SOS response), including recA and lexA. In the presence of single-stranded DNA, RecA interacts with LexA causing an autocatalytic cleavage which disrupts the DNA-binding part of LexA, leading to derepression of the SOS regulon and eventually DNA repair. The polypeptide is LexA repressor (Frankia casuarinae (strain DSM 45818 / CECT 9043 / HFP020203 / CcI3)).